The sequence spans 199 residues: Small ribosomal subunit protein uS4 (199 aa).

The S4 RNA-binding domain occupies 91 to 154; it reads SRLDNVVYRL…KDLIIVKEAL (64 aa).

Belongs to the universal ribosomal protein uS4 family. Part of the 30S ribosomal subunit. Contacts protein S5. The interaction surface between S4 and S5 is involved in control of translational fidelity.

Its function is as follows. One of the primary rRNA binding proteins, it binds directly to 16S rRNA where it nucleates assembly of the body of the 30S subunit. In terms of biological role, with S5 and S12 plays an important role in translational accuracy. This Phytoplasma mali (strain AT) protein is Small ribosomal subunit protein uS4.